The chain runs to 446 residues: O-antigen polymerase (446 aa).

11 helical membrane-spanning segments follow: residues 11–31, 33–53, 58–78, 104–124, 147–167, 186–206, 211–231, 252–272, 355–375, 391–411, and 415–435; these read ICSY…VINE, FCEI…VIII, QGGF…FILI, IYVF…VLLY, QLSM…IKSY, LYDE…SLLF, NFIL…LVGL, LKIK…SLFL, IYLG…SLAF, KLAY…IYFA, and LFDF…LSIV.

Its subcellular location is the cell inner membrane. It carries out the reaction n lipid-linked O-antigen repeat units = a lipid-linked O antigen + (n-1) polyisoprenyl diphosphate.. The protein operates within bacterial outer membrane biogenesis; LPS O-antigen biosynthesis. Its function is as follows. Polymerase involved in the biosynthesis of the lipopolysaccharide (LPS). Catalyzes the polymerization of the O-antigen repeat units on the periplasmic face of the inner membrane, leading to the formation of the lipid-linked O-antigen molecule. In vitro, shows a preference for bacteria-based, undecaprenyl-containing substrates rather than eukaryote-based, dolichol-containing substrates. This chain is O-antigen polymerase, found in Escherichia coli.